A 185-amino-acid chain; its full sequence is Dehydrin ERD14 (185 aa).

Composition is skewed to basic and acidic residues over residues 1-13 (MAEE…EQEV), 25-45 (VTDR…KPEE), 52-78 (FEQK…HRSD), and 103-134 (KPTT…KPED). 2 disordered regions span residues 1-138 (MAEE…GSAV) and 166-185 (EKLP…KDKE). Alanine 2 is modified (N-acetylalanine). Serine 59 carries the phosphoserine modification. A run of 2 repeats spans residues 112-132 (EEEK…HKKP) and 154-174 (PVEK…YHPK). Residues 112–174 (EEEKKGFMEK…KEKLPGYHPK (63 aa)) are 2 X 21 AA repeats, Lys-rich.

Belongs to the plant dehydrin family. In terms of tissue distribution, in stems, cauline leaves, roots and flowers. Low levels found in maturing seeds. Absent in dry seeds.

Its function is as follows. Intrinsically disordered protein acting as a chaperone. Prevents heat-induced aggregation and/or inactivation of various substrates. Binds to acidic phospholipid vesicles without affecting membrane fluidity. The polypeptide is Dehydrin ERD14 (ERD14) (Arabidopsis thaliana (Mouse-ear cress)).